A 426-amino-acid polypeptide reads, in one-letter code: Enolase 2 (426 aa).

Position 163 (Gln-163) interacts with (2R)-2-phosphoglycerate. Glu-205 (proton donor) is an active-site residue. Residues Asp-242, Glu-285, and Asp-312 each contribute to the Mg(2+) site. (2R)-2-phosphoglycerate contacts are provided by Lys-337, Arg-366, Ser-367, and Lys-388. Lys-337 serves as the catalytic Proton acceptor.

This sequence belongs to the enolase family. It depends on Mg(2+) as a cofactor.

The protein resides in the cytoplasm. The protein localises to the secreted. It is found in the cell surface. It carries out the reaction (2R)-2-phosphoglycerate = phosphoenolpyruvate + H2O. It participates in carbohydrate degradation; glycolysis; pyruvate from D-glyceraldehyde 3-phosphate: step 4/5. Catalyzes the reversible conversion of 2-phosphoglycerate (2-PG) into phosphoenolpyruvate (PEP). It is essential for the degradation of carbohydrates via glycolysis. This chain is Enolase 2, found in Methanospirillum hungatei JF-1 (strain ATCC 27890 / DSM 864 / NBRC 100397 / JF-1).